The chain runs to 76 residues: Protein RALF-like 26 (76 aa).

A signal peptide spans 1–22 (MKAWMIILLVICVAVVVEQSEA). C37 and C46 are disulfide-bonded. N-linked (GlcNAc...) asparagine glycosylation is present at N61. Cysteines 66 and 72 form a disulfide.

Belongs to the plant rapid alkalinization factor (RALF) family.

It is found in the secreted. Its function is as follows. Cell signaling peptide that may regulate plant stress, growth, and development. Mediates a rapid alkalinization of extracellular space by mediating a transient increase in the cytoplasmic Ca(2+) concentration leading to a calcium-dependent signaling events through a cell surface receptor and a concomitant activation of some intracellular mitogen-activated protein kinases. This is Protein RALF-like 26 (RALFL26) from Arabidopsis thaliana (Mouse-ear cress).